A 662-amino-acid chain; its full sequence is Calcium-dependent protease (662 aa).

Residues 196–529 (QWHLKETTIG…YGRINALKAV (334 aa)) enclose the Peptidase S8 domain. Active-site charge relay system residues include Asp233, His270, and Ser466. The P/Homo B domain maps to 535–662 (AQPEPVSIFT…IRSLTIELGF (128 aa)).

The protein belongs to the peptidase S8 family.

The protein resides in the cytoplasm. Its function is as follows. Degrades phycobiliproteins in vitro. Has a substrate specificity similar to that of trypsin. The sequence is that of Calcium-dependent protease (prcA) from Nostoc sp. (strain PCC 7120 / SAG 25.82 / UTEX 2576).